Consider the following 383-residue polypeptide: Processive diacylglycerol beta-glucosyltransferase (383 aa).

It belongs to the glycosyltransferase 28 family. UgtP subfamily.

The protein resides in the cell membrane. It catalyses the reaction a 1,2-diacyl-3-O-(beta-D-glucopyranosyl)-sn-glycerol + UDP-alpha-D-glucose = a 1,2-diacyl-3-O-(beta-D-Glc-(1-&gt;6)-beta-D-Glc)-sn-glycerol + UDP + H(+). The catalysed reaction is a 1,2-diacyl-3-O-(beta-D-Glc-(1-&gt;6)-beta-D-Glc)-sn-glycerol + UDP-alpha-D-glucose = a 1,2-diacyl-3-O-(beta-D-Glc-(1-&gt;6)-beta-D-Glc-(1-&gt;6)-beta-D-Glc)-sn-glycerol + UDP + H(+). The enzyme catalyses a 1,2-diacyl-sn-glycerol + UDP-alpha-D-glucose = a 1,2-diacyl-3-O-(beta-D-glucopyranosyl)-sn-glycerol + UDP + H(+). It participates in glycolipid metabolism; diglucosyl-diacylglycerol biosynthesis. In terms of biological role, processive glucosyltransferase involved in the biosynthesis of both the bilayer- and non-bilayer-forming membrane glucolipids. Is able to successively transfer up to three glucosyl residues to diacylglycerol (DAG), thereby catalyzing the formation of beta-monoglucosyl-DAG (3-O-(beta-D-glucopyranosyl)-1,2-diacyl-sn-glycerol), beta-diglucosyl-DAG (3-O-(beta-D-glucopyranosyl-beta-(1-&gt;6)-D-glucopyranosyl)-1,2-diacyl-sn-glycerol) and beta-triglucosyl-DAG (3-O-(beta-D-glucopyranosyl-beta-(1-&gt;6)-D-glucopyranosyl-beta-(1-&gt;6)-D-glucopyranosyl)-1,2-diacyl-sn-glycerol). Beta-diglucosyl-DAG is the predominant glycolipid found in Bacillales and is also used as a membrane anchor for lipoteichoic acid (LTA). The sequence is that of Processive diacylglycerol beta-glucosyltransferase from Bacillus licheniformis (strain ATCC 14580 / DSM 13 / JCM 2505 / CCUG 7422 / NBRC 12200 / NCIMB 9375 / NCTC 10341 / NRRL NRS-1264 / Gibson 46).